The chain runs to 234 residues: MSGLPIATNLYFDAHFHRHGVKLLPNEFYTTREDMVLVTVLGSCVAACLHDPIGRIGGMNHFMLPDDGADPSAAASESMRYGAYAMEVLINELIKAGGRRERFEAKVFGGAAVLAGMTTINIGDRNADFVRRYLALERIRITAEDLQGVHPRKVAFMPHTGQAMVKKLRVQAPDVAAREAALAREAVDPHGERAPRVRPRVELFGTPAPKAQAKPRIELFGMRATQPATRKQEA.

This sequence belongs to the CheD family.

It catalyses the reaction L-glutaminyl-[protein] + H2O = L-glutamyl-[protein] + NH4(+). In terms of biological role, probably deamidates glutamine residues to glutamate on methyl-accepting chemotaxis receptors (MCPs), playing an important role in chemotaxis. This Burkholderia mallei (strain NCTC 10247) protein is Probable chemoreceptor glutamine deamidase CheD.